We begin with the raw amino-acid sequence, 365 residues long: Annexin B22 (365 aa).

Annexin repeat units lie at residues 34-105, 106-185, 211-283, and 287-358; these read FSAS…QLIV, DTPY…SLVQ, ELAE…AVLR, and DRPS…VLMG. Positions 47, 49, 51, 52, 54, 91, 119, 121, 123, 126, 169, 171, 172, 177, 273, 300, 302, 303, 304, and 344 each coordinate Ca(2+).

It belongs to the annexin family. As to quaternary structure, homodimer.

The protein resides in the tegument. It localises to the secreted. Its subcellular location is the extracellular exosome. The protein localises to the host cell. In terms of biological role, involved in reproduction of the worm. Involved in host-parasite interaction. Delivered into the host cell by means of parasite exosomes. Binds to acidic phospholipid membranes in a calcium-dependent manner in vitro. Causes aggregation of liposomes in the presence of calcium, but not in its absence. Likely to promote membrane fusion. May provide structural integrity within the tegument. The chain is Annexin B22 from Schistosoma mansoni (Blood fluke).